Here is a 445-residue protein sequence, read N- to C-terminus: Phosphoglucosamine mutase (445 aa).

Serine 102 functions as the Phosphoserine intermediate in the catalytic mechanism. Serine 102, aspartate 240, aspartate 242, and aspartate 244 together coordinate Mg(2+). Serine 102 bears the Phosphoserine mark.

The protein belongs to the phosphohexose mutase family. Mg(2+) is required as a cofactor. In terms of processing, activated by phosphorylation.

The enzyme catalyses alpha-D-glucosamine 1-phosphate = D-glucosamine 6-phosphate. Functionally, catalyzes the conversion of glucosamine-6-phosphate to glucosamine-1-phosphate. The chain is Phosphoglucosamine mutase from Mycolicibacterium gilvum (strain PYR-GCK) (Mycobacterium gilvum (strain PYR-GCK)).